Reading from the N-terminus, the 221-residue chain is N-(5'-phosphoribosyl)anthranilate isomerase (221 aa).

It belongs to the TrpF family.

The enzyme catalyses N-(5-phospho-beta-D-ribosyl)anthranilate = 1-(2-carboxyphenylamino)-1-deoxy-D-ribulose 5-phosphate. It participates in amino-acid biosynthesis; L-tryptophan biosynthesis; L-tryptophan from chorismate: step 3/5. This is N-(5'-phosphoribosyl)anthranilate isomerase from Geobacillus thermodenitrificans (strain NG80-2).